Consider the following 485-residue polypeptide: Glutamyl-tRNA(Gln) amidotransferase subunit A (485 aa).

Residues lysine 79 and serine 154 each act as charge relay system in the active site. The active-site Acyl-ester intermediate is the serine 178.

This sequence belongs to the amidase family. GatA subfamily. As to quaternary structure, heterotrimer of A, B and C subunits.

It catalyses the reaction L-glutamyl-tRNA(Gln) + L-glutamine + ATP + H2O = L-glutaminyl-tRNA(Gln) + L-glutamate + ADP + phosphate + H(+). Allows the formation of correctly charged Gln-tRNA(Gln) through the transamidation of misacylated Glu-tRNA(Gln) in organisms which lack glutaminyl-tRNA synthetase. The reaction takes place in the presence of glutamine and ATP through an activated gamma-phospho-Glu-tRNA(Gln). The chain is Glutamyl-tRNA(Gln) amidotransferase subunit A from Staphylococcus aureus (strain USA300 / TCH1516).